Reading from the N-terminus, the 131-residue chain is Lymphocyte antigen 6E (131 aa).

Residues 1 to 20 form the signal peptide; the sequence is MKIFLPVLLAALLGVERASS. One can recognise a UPAR/Ly6 domain in the interval 21-101; that stretch reads LMCFSCLNQK…CCQSFLCNFS (81 aa). Intrachain disulfides connect C23–C48, C26–C35, C41–C71, C75–C92, and C93–C98. N-linked (GlcNAc...) asparagine glycosylation is present at N99. S101 carries the GPI-anchor amidated serine lipid modification. The propeptide at 102 to 131 is removed in mature form; the sequence is AADGGLRASVTLLGAGLLLSLLPALLRFGP.

As to quaternary structure, interacts with CHRNA4. As to expression, widely expressed, predominantly in liver, kidney, ovary, spleen and peripheral blood Leukocytes.

The protein resides in the cell membrane. Functionally, GPI-anchored cell surface protein that regulates T-lymphocytes proliferation, differentiation, and activation. Regulates the T-cell receptor (TCR) signaling by interacting with component CD3Z/CD247 at the plasma membrane, leading to CD3Z/CD247 phosphorylation modulation. Restricts the entry of human coronaviruses, including SARS-CoV, MERS-CoV and SARS-CoV-2, by interfering with spike protein-mediated membrane fusion. Also plays an essential role in placenta formation by acting as the main receptor for syncytin-A (SynA). Therefore, participates in the normal fusion of syncytiotrophoblast layer I (SynT-I) and in the proper morphogenesis of both fetal and maternal vasculatures within the placenta. May also act as a modulator of nicotinic acetylcholine receptors (nAChRs) activity. In terms of biological role, (Microbial infection) Promotes entry, likely through an enhanced virus-cell fusion process, of various viruses including HIV-1, West Nile virus, dengue virus and Zika virus. In contrast, the paramyxovirus PIV5, which enters at the plasma membrane, does not require LY6E. Mechanistically, adopts a microtubule-like organization upon viral infection and enhances viral uncoating after endosomal escape. The polypeptide is Lymphocyte antigen 6E (Homo sapiens (Human)).